The primary structure comprises 166 residues: Lipoprotein signal peptidase (166 aa).

The next 4 helical transmembrane spans lie at 9–29 (ASGA…FDQL), 45–65 (ALTS…FGFL), 71–91 (WQRW…CFLL), and 100–120 (FSVS…DRLV). Catalysis depends on residues D126 and D144. Residues 135-155 (WHFPAFNLADSAITVGAVLLI) form a helical membrane-spanning segment.

Belongs to the peptidase A8 family.

The protein resides in the cell inner membrane. The catalysed reaction is Release of signal peptides from bacterial membrane prolipoproteins. Hydrolyzes -Xaa-Yaa-Zaa-|-(S,diacylglyceryl)Cys-, in which Xaa is hydrophobic (preferably Leu), and Yaa (Ala or Ser) and Zaa (Gly or Ala) have small, neutral side chains.. Its pathway is protein modification; lipoprotein biosynthesis (signal peptide cleavage). Its function is as follows. This protein specifically catalyzes the removal of signal peptides from prolipoproteins. The polypeptide is Lipoprotein signal peptidase (Burkholderia cenocepacia (strain HI2424)).